The chain runs to 448 residues: tRNA-2-methylthio-N(6)-dimethylallyladenosine synthase (448 aa).

An MTTase N-terminal domain is found at 3 to 118 (KKVFIKTFGC…LPELLNARAA (116 aa)). [4Fe-4S] cluster-binding residues include Cys-12, Cys-49, Cys-81, Cys-155, Cys-159, and Cys-162. The 234-residue stretch at 141–374 (RVEGASAFVS…QAVINRNILE (234 aa)) folds into the Radical SAM core domain. The TRAM domain occupies 377–440 (QERVGTVQRL…TYTLRGEVVM (64 aa)).

The protein belongs to the methylthiotransferase family. MiaB subfamily. As to quaternary structure, monomer. The cofactor is [4Fe-4S] cluster.

Its subcellular location is the cytoplasm. It carries out the reaction N(6)-dimethylallyladenosine(37) in tRNA + (sulfur carrier)-SH + AH2 + 2 S-adenosyl-L-methionine = 2-methylsulfanyl-N(6)-dimethylallyladenosine(37) in tRNA + (sulfur carrier)-H + 5'-deoxyadenosine + L-methionine + A + S-adenosyl-L-homocysteine + 2 H(+). Its function is as follows. Catalyzes the methylthiolation of N6-(dimethylallyl)adenosine (i(6)A), leading to the formation of 2-methylthio-N6-(dimethylallyl)adenosine (ms(2)i(6)A) at position 37 in tRNAs that read codons beginning with uridine. The sequence is that of tRNA-2-methylthio-N(6)-dimethylallyladenosine synthase from Acidovorax sp. (strain JS42).